Reading from the N-terminus, the 387-residue chain is Formate-dependent phosphoribosylglycinamide formyltransferase (387 aa).

Residues 12 to 13 (EL) and Glu-72 each bind N(1)-(5-phospho-beta-D-ribosyl)glycinamide. ATP-binding positions include Arg-104, Lys-145, 150–155 (SSGKGQ), 185–188 (EEFI), and Glu-193. Residues 109 to 300 (DLAAKDLKLL…EFELHIRAIL (192 aa)) enclose the ATP-grasp domain. 2 residues coordinate Mg(2+): Glu-258 and Glu-270. N(1)-(5-phospho-beta-D-ribosyl)glycinamide-binding positions include Asp-277, Lys-348, and 355–356 (RR).

It belongs to the PurK/PurT family. Homodimer.

It carries out the reaction N(1)-(5-phospho-beta-D-ribosyl)glycinamide + formate + ATP = N(2)-formyl-N(1)-(5-phospho-beta-D-ribosyl)glycinamide + ADP + phosphate + H(+). Its pathway is purine metabolism; IMP biosynthesis via de novo pathway; N(2)-formyl-N(1)-(5-phospho-D-ribosyl)glycinamide from N(1)-(5-phospho-D-ribosyl)glycinamide (formate route): step 1/1. In terms of biological role, involved in the de novo purine biosynthesis. Catalyzes the transfer of formate to 5-phospho-ribosyl-glycinamide (GAR), producing 5-phospho-ribosyl-N-formylglycinamide (FGAR). Formate is provided by PurU via hydrolysis of 10-formyl-tetrahydrofolate. The protein is Formate-dependent phosphoribosylglycinamide formyltransferase of Leptospira borgpetersenii serovar Hardjo-bovis (strain JB197).